A 130-amino-acid polypeptide reads, in one-letter code: Small ribosomal subunit protein uS11c (130 aa).

Belongs to the universal ribosomal protein uS11 family. In terms of assembly, part of the 30S ribosomal subunit.

It is found in the plastid. The protein localises to the chloroplast. This chain is Small ribosomal subunit protein uS11c, found in Chlorella vulgaris (Green alga).